The sequence spans 120 residues: NAD(P)H-quinone oxidoreductase subunit 3, chloroplastic (120 aa).

A run of 3 helical transmembrane segments spans residues 7–27, 64–84, and 89–109; these read YQTF…ALLI, SFAL…PWAM, and LGIF…IGLV.

This sequence belongs to the complex I subunit 3 family. As to quaternary structure, NDH is composed of at least 16 different subunits, 5 of which are encoded in the nucleus.

The protein resides in the plastid. The protein localises to the chloroplast thylakoid membrane. It carries out the reaction a plastoquinone + NADH + (n+1) H(+)(in) = a plastoquinol + NAD(+) + n H(+)(out). The catalysed reaction is a plastoquinone + NADPH + (n+1) H(+)(in) = a plastoquinol + NADP(+) + n H(+)(out). Functionally, NDH shuttles electrons from NAD(P)H:plastoquinone, via FMN and iron-sulfur (Fe-S) centers, to quinones in the photosynthetic chain and possibly in a chloroplast respiratory chain. The immediate electron acceptor for the enzyme in this species is believed to be plastoquinone. Couples the redox reaction to proton translocation, and thus conserves the redox energy in a proton gradient. The protein is NAD(P)H-quinone oxidoreductase subunit 3, chloroplastic of Psilotum nudum (Whisk fern).